We begin with the raw amino-acid sequence, 530 residues long: Vesicular acetylcholine transporter (530 aa).

Residues 1–33 (MEPTAPTGQARAAATKLSEAVGAALQEPQRQRR) lie on the Cytoplasmic side of the membrane. A helical membrane pass occupies residues 34–54 (LVLVIVCVALLLDNMLYMVIV). Topologically, residues 55 to 125 (PIVPDYIAHM…PTESEDVKIG (71 aa)) are lumenal, vesicle. N89 and N96 each carry an N-linked (GlcNAc...) asparagine glycan. Residues 126–146 (VLFASKAILQLLVNPLSGPFI) form a helical membrane-spanning segment. Residues 147–152 (DRMSYD) are Cytoplasmic-facing. The chain crosses the membrane as a helical span at residues 153 to 173 (VPLLIGLGVMFASTVMFAFAE). Topologically, residues 174–182 (DYATFFAAR) are lumenal, vesicle. Residues 183–203 (SLQGLGSAFADTSGIAMIADK) form a helical membrane-spanning segment. Over 204 to 213 (YPEEPERSRA) the chain is Cytoplasmic. The chain crosses the membrane as a helical span at residues 214–234 (LGVALAFISFGSLVAPPFGGI). Residues 235-242 (LYEFAGKR) lie on the Lumenal, vesicle side of the membrane. The helical transmembrane segment at 243 to 263 (VPFLVLAAVSLFDALLLLAVA) threads the bilayer. Over 264–288 (KPFSAAARARANLPVGTPIHRLMLD) the chain is Cytoplasmic. The chain crosses the membrane as a helical span at residues 289–309 (PYIAVVAGALTTCNIPLAFLE). Residues 310–325 (PTIATWMKHTMAASEW) lie on the Lumenal, vesicle side of the membrane. The chain crosses the membrane as a helical span at residues 326 to 346 (EMGMVWLPAFVPHVLGVYLTV). Over 347–356 (RLAARYPHLQ) the chain is Cytoplasmic. A helical membrane pass occupies residues 357 to 377 (WLYGALGLAVIGVSSCVVPAC). Over 378–388 (RSFAPLVVSLC) the chain is Lumenal, vesicle. A helical membrane pass occupies residues 389–409 (GLCFGIALVDTALLPTLAFLV). Topologically, residues 410–422 (DVRHVSVYGSVYA) are cytoplasmic. A helical membrane pass occupies residues 423 to 443 (IADISYSVAYALGPIVAGHIV). At 444 to 447 (HSLG) the chain is on the lumenal, vesicle side. Residues 448–468 (FEQLSLGMGLANLLYAPVLLL) form a helical membrane-spanning segment. Residues 469–530 (LRNVGLLTRS…EDDYNYYSRS (62 aa)) are Cytoplasmic-facing. Positions 471-530 (NVGLLTRSRSERDVLLDEPPQGLYDAVRLREVQGKDGGEPCSPPGPFDGCEDDYNYYSRS) are mediates interaction with SEC14L1. Residues 504–530 (GKDGGEPCSPPGPFDGCEDDYNYYSRS) are disordered.

This sequence belongs to the major facilitator superfamily. Vesicular transporter family. Interacts with SEC14L1. In terms of tissue distribution, expressed in the spinal cord, brain (excluding the cerebellum), brain stem and cholinergic tissues. Not expressed in peripheral tissues such as liver and kidney.

It localises to the cytoplasmic vesicle. The protein localises to the secretory vesicle. It is found in the synaptic vesicle membrane. The catalysed reaction is acetylcholine(out) + 2 H(+)(in) = acetylcholine(in) + 2 H(+)(out). It catalyses the reaction choline(in) + 2 H(+)(out) = choline(out) + 2 H(+)(in). It carries out the reaction serotonin(in) + 2 H(+)(out) = serotonin(out) + 2 H(+)(in). In terms of biological role, electrogenic antiporter that exchanges one cholinergic neurotransmitter, acetylcholine or choline, with two intravesicular protons across the membrane of synaptic vesicles. Uses the electrochemical proton gradient established by the V-type proton-pump ATPase to store neurotransmitters inside the vesicles prior to their release via exocytosis. Determines cholinergic vesicular quantal size at presynaptic nerve terminals in developing neuro-muscular junctions with an impact on motor neuron differentiation and innervation pattern. Part of forebrain cholinergic system, regulates hippocampal synapse transmissions that underlie spatial memory formation. Can transport serotonin. The polypeptide is Vesicular acetylcholine transporter (Slc18a3) (Mus musculus (Mouse)).